Reading from the N-terminus, the 524-residue chain is Tubulin-specific chaperone E (524 aa).

N-acetylserine is present on Ser2. The region spanning 27–71 (GAVPPVAGLWLGVEWDNPERGKHDGSHEGTMYFKCRHPTGGSFVR) is the CAP-Gly domain. LRR repeat units lie at residues 154-175 (NIRVVNLSKNLLSTWDEVVLIA), 180-201 (DLEALDLSENKLQFPSDSPTLT), 206-227 (TLKTLVLNKTGITWTEVLHCAP), 231-253 (VLEELYLKSNNISISERPVNVLQ), 254-275 (KMRLLDLSSNPSIDESQLSLIA), 279-300 (RLEHLVLSDIGLSSIHFPDAEI), and 309-330 (ALKYLIVNDNQISEWSFINELD). Positions 343–381 (NPLSKADKAEEIIIAKIAQLRTLNRCQILPEERRGAELD) constitute an LRRCT domain. Lys460 carries the post-translational modification N6-acetyllysine. Ser492 is modified (phosphoserine).

Belongs to the TBCE family. Supercomplex made of cofactors A to E. Cofactors A and D function by capturing and stabilizing tubulin in a quasi-native conformation. Cofactor E binds to the cofactor D-tubulin complex; interaction with cofactor C then causes the release of tubulin polypeptides that are committed to the native state. Cofactors B and E can form a heterodimer which binds to alpha-tubulin and enhances their ability to dissociate tubulin heterodimers. Interacts with TBCD. In terms of tissue distribution, ubiquitously expressed.

It localises to the cytoplasm. The protein localises to the cytoskeleton. Functionally, tubulin-folding protein; involved in the second step of the tubulin folding pathway and in the regulation of tubulin heterodimer dissociation. Required for correct organization of microtubule cytoskeleton and mitotic splindle, and maintenance of the neuronal microtubule network. The polypeptide is Tubulin-specific chaperone E (Tbce) (Mus musculus (Mouse)).